The chain runs to 2290 residues: Armadillo repeat-containing X-linked protein 4 (2290 aa).

The helical transmembrane segment at Val-7 to Ile-24 threads the bilayer. Disordered stretches follow at residues Gln-517–Gln-549, Ser-564–Asp-583, Lys-967–Ala-988, Ala-1014–Lys-1087, Gly-1302–Gly-1430, Gly-1521–Asp-1715, Ser-1911–Asn-1931, and Asn-1954–Glu-1973. Basic residues predominate over residues Gly-526 to Cys-536. A compositionally biased stretch (polar residues) spans Thr-1073–Lys-1087. Gly residues-rich tracts occupy residues Ser-1328–Met-1341 and Ala-1403–Lys-1414. The segment covering Asp-1419–Gly-1430 has biased composition (polar residues). The span at Gly-1521 to Arg-1535 shows a compositional bias: gly residues. The span at Gly-1537–Cys-1558 shows a compositional bias: polar residues. Composition is skewed to gly residues over residues Ile-1581–Arg-1598 and Gly-1609–Arg-1623. Residues Asp-1628–Arg-1645 are compositionally biased toward polar residues. Over residues Gly-1674–Ser-1687 the composition is skewed to low complexity. 4 ARM repeats span residues Arg-2031 to Asp-2071, Ser-2073 to Val-2112, Ile-2153 to Lys-2192, and Pro-2194 to Tyr-2234.

This sequence belongs to the eutherian X-chromosome-specific Armcx family.

It localises to the membrane. The sequence is that of Armadillo repeat-containing X-linked protein 4 (ARMCX4) from Homo sapiens (Human).